Reading from the N-terminus, the 155-residue chain is 6,7-dimethyl-8-ribityllumazine synthase (155 aa).

5-amino-6-(D-ribitylamino)uracil is bound by residues F22, 57 to 59 (AYE), and 81 to 83 (SVI). Residue 86–87 (GT) coordinates (2S)-2-hydroxy-3-oxobutyl phosphate. The active-site Proton donor is H88. F113 lines the 5-amino-6-(D-ribitylamino)uracil pocket. Residue R127 participates in (2S)-2-hydroxy-3-oxobutyl phosphate binding.

This sequence belongs to the DMRL synthase family. Forms an icosahedral capsid composed of 60 subunits, arranged as a dodecamer of pentamers.

The enzyme catalyses (2S)-2-hydroxy-3-oxobutyl phosphate + 5-amino-6-(D-ribitylamino)uracil = 6,7-dimethyl-8-(1-D-ribityl)lumazine + phosphate + 2 H2O + H(+). It functions in the pathway cofactor biosynthesis; riboflavin biosynthesis; riboflavin from 2-hydroxy-3-oxobutyl phosphate and 5-amino-6-(D-ribitylamino)uracil: step 1/2. Catalyzes the formation of 6,7-dimethyl-8-ribityllumazine by condensation of 5-amino-6-(D-ribitylamino)uracil with 3,4-dihydroxy-2-butanone 4-phosphate. This is the penultimate step in the biosynthesis of riboflavin. The chain is 6,7-dimethyl-8-ribityllumazine synthase from Photobacterium phosphoreum.